The primary structure comprises 348 residues: Phosphoribosylformylglycinamidine cyclo-ligase (348 aa).

Belongs to the AIR synthase family.

Its subcellular location is the cytoplasm. It carries out the reaction 2-formamido-N(1)-(5-O-phospho-beta-D-ribosyl)acetamidine + ATP = 5-amino-1-(5-phospho-beta-D-ribosyl)imidazole + ADP + phosphate + H(+). The protein operates within purine metabolism; IMP biosynthesis via de novo pathway; 5-amino-1-(5-phospho-D-ribosyl)imidazole from N(2)-formyl-N(1)-(5-phospho-D-ribosyl)glycinamide: step 2/2. The protein is Phosphoribosylformylglycinamidine cyclo-ligase of Cereibacter sphaeroides (strain ATCC 17029 / ATH 2.4.9) (Rhodobacter sphaeroides).